Here is a 303-residue protein sequence, read N- to C-terminus: UDP-3-O-acyl-N-acetylglucosamine deacetylase (303 aa).

Residues histidine 78, histidine 237, and aspartate 241 each coordinate Zn(2+). Residue histidine 264 is the Proton donor of the active site.

The protein belongs to the LpxC family. It depends on Zn(2+) as a cofactor.

The enzyme catalyses a UDP-3-O-[(3R)-3-hydroxyacyl]-N-acetyl-alpha-D-glucosamine + H2O = a UDP-3-O-[(3R)-3-hydroxyacyl]-alpha-D-glucosamine + acetate. Its pathway is glycolipid biosynthesis; lipid IV(A) biosynthesis; lipid IV(A) from (3R)-3-hydroxytetradecanoyl-[acyl-carrier-protein] and UDP-N-acetyl-alpha-D-glucosamine: step 2/6. Catalyzes the hydrolysis of UDP-3-O-myristoyl-N-acetylglucosamine to form UDP-3-O-myristoylglucosamine and acetate, the committed step in lipid A biosynthesis. The sequence is that of UDP-3-O-acyl-N-acetylglucosamine deacetylase from Coxiella burnetii (strain CbuG_Q212) (Coxiella burnetii (strain Q212)).